Here is an 868-residue protein sequence, read N- to C-terminus: Probable mixed-linked glucan synthase 3 (868 aa).

The interval 36 to 68 is disordered; it reads ERKAAGGGGGGAKGKHWAAADKGERRAAKECGG. A compositionally biased stretch (basic and acidic residues) spans 53 to 68; sequence AAADKGERRAAKECGG. Transmembrane regions (helical) follow at residues 86–106 and 116–136; these read LLHP…LFFG and IMWF…SWLL. The active site involves D211. Positions 412 and 414 each coordinate substrate. Residue D573 is part of the active site. A run of 6 helical transmembrane segments spans residues 649–669, 686–706, 717–737, 771–791, 809–829, and 837–857; these read IYPV…MWLI, LLMI…WAGI, FFMI…VVNL, MLIP…VAIG, IMGL…ALAI, and PIIL…VYVA.

This sequence belongs to the glycosyltransferase 2 family. Plant cellulose synthase-like F subfamily.

Its subcellular location is the golgi apparatus membrane. Its function is as follows. May catalyze both beta-1,3 and beta-1,4 glycosidic linkage on beta-D-glucan. Essential for (1,3;1,4)-beta-D-glucans synthesis in grasses and cereals (Poaceae). The mixed-linked glucans (which are not present in walls of dicotyledons or most other monocotyledonous plants) are particularly important constituents of the walls of the starchy endosperm and aleurone cells of cereal grains such as oats, wheat, rice and barley. They can account for up to 70% by weight of the wall. This chain is Probable mixed-linked glucan synthase 3 (CSLF3), found in Oryza sativa subsp. indica (Rice).